The chain runs to 106 residues: Large ribosomal subunit protein uL24 (106 aa).

Belongs to the universal ribosomal protein uL24 family. In terms of assembly, part of the 50S ribosomal subunit.

One of two assembly initiator proteins, it binds directly to the 5'-end of the 23S rRNA, where it nucleates assembly of the 50S subunit. Functionally, one of the proteins that surrounds the polypeptide exit tunnel on the outside of the subunit. The sequence is that of Large ribosomal subunit protein uL24 from Marinobacter nauticus (strain ATCC 700491 / DSM 11845 / VT8) (Marinobacter aquaeolei).